Consider the following 600-residue polypeptide: NADH-quinone oxidoreductase subunit C/D (600 aa).

Residues 1-190 (MIDLMPKKNT…EPFFLNEQKE (190 aa)) are NADH dehydrogenase I subunit C. Positions 214-600 (EFMFLNLGPN…IDFVMSDVDR (387 aa)) are NADH dehydrogenase I subunit D.

In the N-terminal section; belongs to the complex I 30 kDa subunit family. This sequence in the C-terminal section; belongs to the complex I 49 kDa subunit family. As to quaternary structure, NDH-1 is composed of 13 different subunits. Subunits NuoB, CD, E, F, and G constitute the peripheral sector of the complex.

The protein resides in the cell membrane. The enzyme catalyses a quinone + NADH + 5 H(+)(in) = a quinol + NAD(+) + 4 H(+)(out). In terms of biological role, NDH-1 shuttles electrons from NADH, via FMN and iron-sulfur (Fe-S) centers, to quinones in the respiratory chain. The immediate electron acceptor for the enzyme in this species is believed to be ubiquinone. Couples the redox reaction to proton translocation (for every two electrons transferred, four hydrogen ions are translocated across the cytoplasmic membrane), and thus conserves the redox energy in a proton gradient. This is NADH-quinone oxidoreductase subunit C/D from Buchnera aphidicola subsp. Acyrthosiphon pisum (strain 5A).